A 200-amino-acid polypeptide reads, in one-letter code: Lipopolysaccharide core heptose(II)-phosphate phosphatase (200 aa).

The signal sequence occupies residues 1-25 (MLAFCRSSLKSKKYFIILLALAAIA).

This sequence belongs to the phosphoglycerate mutase family. Ais subfamily.

Its subcellular location is the periplasm. It participates in bacterial outer membrane biogenesis; lipopolysaccharide metabolism. Functionally, catalyzes the dephosphorylation of heptose(II) of the outer membrane lipopolysaccharide core. This is Lipopolysaccharide core heptose(II)-phosphate phosphatase from Escherichia coli O157:H7.